We begin with the raw amino-acid sequence, 135 residues long: Large ribosomal subunit protein eL27x (135 aa).

It belongs to the eukaryotic ribosomal protein eL27 family.

In Arabidopsis thaliana (Mouse-ear cress), this protein is Large ribosomal subunit protein eL27x (RPL27C).